The chain runs to 466 residues: Nuclear pore complex protein Nup50 (466 aa).

Basic and acidic residues predominate over residues 1 to 14 (MAKRVAEKELTDRN). A disordered region spans residues 1 to 22 (MAKRVAEKELTDRNWDEEDEVE). At Lys-8 the chain carries N6-acetyllysine. Ser-52 is subject to Phosphoserine. Copy 1 of the repeat occupies 76–77 (FG). The interval 76–302 (FGGSGGKPLE…FSAGSSSLFG (227 aa)) is 5 X 2 AA repeats of F-G. Lys-82 bears the N6-acetyllysine mark. The stretch at 112-113 (FG) is repeat 2. N6-acetyllysine is present on Lys-126. 2 disordered regions span residues 128–150 (ISSPKCNNSNQPPSSGPASSTAC) and 200–257 (LENG…AEKK). Over residues 131-150 (PKCNNSNQPPSSGPASSTAC) the composition is skewed to polar residues. A binding to CDKN1B region spans residues 143-205 (GPASSTACPG…IEKQLENGGG (63 aa)). Ser-208 is subject to Phosphoserine. Repeat 3 spans residues 225-226 (FG). Residues 225–235 (FGSTKLQQESP) show a composition bias toward polar residues. Ser-234 is modified (phosphoserine). Positions 241 to 257 (NKAEDTSEKVEFTAEKK) are enriched in basic and acidic residues. Position 246 is a phosphothreonine (Thr-246). Residue Ser-268 is modified to Phosphoserine. Repeat unit 4 spans residues 271-272 (FG). Ser-294 is subject to Phosphoserine. The stretch at 301-302 (FG) is repeat 5. Residues 316-343 (SAKASESPAGGGSSECRDGEEEENDEPP) are disordered. One can recognise a RanBD1 domain in the interval 333 to 466 (DGEEEENDEP…HKILLEKKDA (134 aa)). Lys-351 is covalently cross-linked (Glycyl lysine isopeptide (Lys-Gly) (interchain with G-Cter in SUMO2)). Lys-448 carries the N6-acetyllysine modification.

In terms of assembly, does not interact with TPR. Interacts with Importin alpha-2, Importin beta, Importin beta-2, NUP153, Ran binding protein 7, CDKN1B and itself. Widely expressed at low levels. Highest in the developing neural tube and adult testes.

It is found in the nucleus. Its subcellular location is the nuclear pore complex. It localises to the nucleus membrane. Component of the nuclear pore complex that has a direct role in nuclear protein import. Actively displaces NLSs from importin-alpha, and facilitates disassembly of the importin-alpha:beta-cargo complex and importin recycling. Interacts with regulatory proteins of cell cycle progression including CDKN1B. This interaction is required for correct intracellular transport and degradation of CDKN1B. This Mus musculus (Mouse) protein is Nuclear pore complex protein Nup50 (Nup50).